A 182-amino-acid chain; its full sequence is MNKQPEDWLDDVPENKNDDDDEIIWVSKSEIKRDAEALKDLGTELVDLGKNALERIPLDEDLLAAIELAQKIKKEGRRRQLQLIGKMLRARDVEPIQTALDKLKNRHNQQISLFHKLETLRDRLIAEGDEAIPTVLELYPDADRQQLRSLVRNAQKEQAANKPPKSFRQIFSYLRELAEKKQ.

Belongs to the DarP family.

It localises to the cytoplasm. Member of a network of 50S ribosomal subunit biogenesis factors which assembles along the 30S-50S interface, preventing incorrect 23S rRNA structures from forming. Promotes peptidyl transferase center (PTC) maturation. This is Dual-action ribosomal maturation protein DarP from Yersinia pestis.